The following is a 149-amino-acid chain: MMKQFKEFAVRGNVVDMAVGIIVGGAFGKLVNTLVSDVMMPPLGFLTGGVDFTNLYFVLSEGSTPGPYAALEQARAAGAVTVNYGLFINAMISFIIMAFAVYLLVRGINSLRRKEEAAPPPSTKQCPFCLSTVPLKATRCPACTSGLEK.

Helical transmembrane passes span 14-34 (VVDMAVGIIVGGAFGKLVNTL) and 85-105 (GLFINAMISFIIMAFAVYLLV).

Belongs to the MscL family. In terms of assembly, homopentamer.

Its subcellular location is the cell inner membrane. Channel that opens in response to stretch forces in the membrane lipid bilayer. May participate in the regulation of osmotic pressure changes within the cell. This is Large-conductance mechanosensitive channel from Chlorobium phaeovibrioides (strain DSM 265 / 1930) (Prosthecochloris vibrioformis (strain DSM 265)).